The sequence spans 314 residues: Beta-lactamase (314 aa).

A signal peptide (tat-type signal) is located at residues 1 to 39; that stretch reads MHPSTSRPSRRTLLTATAGAALAAATLVPGTAHASSGGR. A disordered region spans residues 31 to 50; it reads TAHASSGGRGHGSGSVSDAE. The active-site Acyl-ester intermediate is Ser89. Substrate is bound at residue 259–261; the sequence is KTG.

This sequence belongs to the class-A beta-lactamase family. Post-translationally, predicted to be exported by the Tat system. The position of the signal peptide cleavage has been experimentally proven.

It catalyses the reaction a beta-lactam + H2O = a substituted beta-amino acid. The protein is Beta-lactamase of Streptomyces albus G.